A 410-amino-acid chain; its full sequence is Cytochrome P450 (410 aa).

Heme is bound at residue Cys-359.

This sequence belongs to the cytochrome P450 family. Heme serves as cofactor.

The chain is Cytochrome P450 (cypA) from Bacillus subtilis (strain 168).